The following is a 442-amino-acid chain: Enolase 1 (442 aa).

The segment at 73–140 is binds human collagen; the sequence is KLIAKEIVGY…YNYLGGFNAH (68 aa). Gln-163 serves as a coordination point for (2R)-2-phosphoglycerate. Glu-205 serves as the catalytic Proton donor. The Mg(2+) site is built by Asp-242, Glu-290, and Asp-317. Residues Lys-342, Arg-371, Ser-372, and Lys-393 each coordinate (2R)-2-phosphoglycerate. Residue Lys-342 is the Proton acceptor of the active site.

The protein belongs to the enolase family. The cofactor is Mg(2+).

The protein localises to the cytoplasm. Its subcellular location is the secreted. It is found in the cell surface. The enzyme catalyses (2R)-2-phosphoglycerate = phosphoenolpyruvate + H2O. Its pathway is carbohydrate degradation; glycolysis; pyruvate from D-glyceraldehyde 3-phosphate: step 4/5. Its function is as follows. Catalyzes the reversible conversion of 2-phosphoglycerate (2-PG) into phosphoenolpyruvate (PEP). It is essential for the degradation of carbohydrates via glycolysis. Functionally, 'Moonlights' as a collagen receptor. Binds host (human) collagen, which may contribute to pathogenicity. This is Enolase 1 from Lactiplantibacillus plantarum (strain ATCC BAA-793 / NCIMB 8826 / WCFS1) (Lactobacillus plantarum).